Consider the following 538-residue polypeptide: Phospho-2-dehydro-3-deoxyheptonate aldolase 1, chloroplastic (538 aa).

Residues 1 to 74 constitute a chloroplast transit peptide; sequence MALSSTSTTN…KPSKSSPPAA (74 aa). The disordered stretch occupies residues 55 to 82; sequence DSNKIPIVSDKPSKSSPPAATATTAPAP. Over residues 68–82 the composition is skewed to low complexity; it reads KSSPPAATATTAPAP. The residue at position 75 (Thr75) is a Blocked amino end (Thr).

It belongs to the class-II DAHP synthase family.

It localises to the plastid. The protein resides in the chloroplast. It catalyses the reaction D-erythrose 4-phosphate + phosphoenolpyruvate + H2O = 7-phospho-2-dehydro-3-deoxy-D-arabino-heptonate + phosphate. The protein operates within metabolic intermediate biosynthesis; chorismate biosynthesis; chorismate from D-erythrose 4-phosphate and phosphoenolpyruvate: step 1/7. With respect to regulation, activation by tryptophan (a hysteretic factor). This chain is Phospho-2-dehydro-3-deoxyheptonate aldolase 1, chloroplastic (SHKA), found in Solanum tuberosum (Potato).